We begin with the raw amino-acid sequence, 412 residues long: Argininosuccinate synthase (412 aa).

Residues A24–S32 and A50 contribute to the ATP site. Residues Y103 and S108 each contribute to the L-citrulline site. G132 is a binding site for ATP. The L-aspartate site is built by T134, N138, and D139. Residue N138 coordinates L-citrulline. Position 142 (R142) interacts with L-citrulline.

The protein belongs to the argininosuccinate synthase family. Type 1 subfamily. As to quaternary structure, homotetramer.

It localises to the cytoplasm. The catalysed reaction is L-citrulline + L-aspartate + ATP = 2-(N(omega)-L-arginino)succinate + AMP + diphosphate + H(+). The protein operates within amino-acid biosynthesis; L-arginine biosynthesis; L-arginine from L-ornithine and carbamoyl phosphate: step 2/3. This Xanthomonas axonopodis pv. citri (strain 306) protein is Argininosuccinate synthase.